The sequence spans 168 residues: Protein FAM163A (168 aa).

Residues 6–26 (VVITGGILATVILLCIIAVLC) traverse the membrane as a helical segment.

The protein belongs to the FAM163 family.

The protein localises to the membrane. This is Protein FAM163A (Fam163a) from Mus musculus (Mouse).